The sequence spans 481 residues: Glutamate-1-semialdehyde 2,1-aminomutase, chloroplastic (481 aa).

Positions 18–40 (NQTPKWGFSPSHRRCNPSSSSSA) are disordered. Lys321 is modified (N6-(pyridoxal phosphate)lysine).

It belongs to the class-III pyridoxal-phosphate-dependent aminotransferase family. HemL subfamily. In terms of assembly, homodimer. Pyridoxal 5'-phosphate serves as cofactor.

Its subcellular location is the plastid. It localises to the chloroplast. The catalysed reaction is (S)-4-amino-5-oxopentanoate = 5-aminolevulinate. The protein operates within porphyrin-containing compound metabolism; protoporphyrin-IX biosynthesis; 5-aminolevulinate from L-glutamyl-tRNA(Glu): step 2/2. Its pathway is porphyrin-containing compound metabolism; chlorophyll biosynthesis. This chain is Glutamate-1-semialdehyde 2,1-aminomutase, chloroplastic, found in Solanum lycopersicum (Tomato).